The following is a 514-amino-acid chain: 2,3-bisphosphoglycerate-independent phosphoglycerate mutase (514 aa).

Residues aspartate 14 and serine 64 each coordinate Mn(2+). Serine 64 serves as the catalytic Phosphoserine intermediate. Substrate contacts are provided by residues histidine 125, 155–156 (RD), arginine 187, arginine 193, 263–266 (RADR), and lysine 336. Residues aspartate 403, histidine 407, aspartate 444, histidine 445, and histidine 463 each contribute to the Mn(2+) site.

Belongs to the BPG-independent phosphoglycerate mutase family. Monomer. It depends on Mn(2+) as a cofactor.

It carries out the reaction (2R)-2-phosphoglycerate = (2R)-3-phosphoglycerate. It functions in the pathway carbohydrate degradation; glycolysis; pyruvate from D-glyceraldehyde 3-phosphate: step 3/5. Functionally, catalyzes the interconversion of 2-phosphoglycerate and 3-phosphoglycerate. This is 2,3-bisphosphoglycerate-independent phosphoglycerate mutase from Shewanella denitrificans (strain OS217 / ATCC BAA-1090 / DSM 15013).